The chain runs to 399 residues: S-adenosylmethionine synthase (399 aa).

Histidine 17 contributes to the ATP binding site. Aspartate 19 provides a ligand contact to Mg(2+). Glutamate 52 is a binding site for K(+). Positions 65 and 109 each coordinate L-methionine. A flexible loop region spans residues 109–119; that stretch reads QSADIAQGVDA. ATP contacts are provided by residues 177–179, 243–244, aspartate 252, 258–259, alanine 275, and lysine 279; these read DSK, KF, and RK. L-methionine is bound at residue aspartate 252. Residue lysine 283 coordinates L-methionine.

It belongs to the AdoMet synthase family. As to quaternary structure, homotetramer; dimer of dimers. It depends on Mg(2+) as a cofactor. The cofactor is K(+).

The protein localises to the cytoplasm. The enzyme catalyses L-methionine + ATP + H2O = S-adenosyl-L-methionine + phosphate + diphosphate. It functions in the pathway amino-acid biosynthesis; S-adenosyl-L-methionine biosynthesis; S-adenosyl-L-methionine from L-methionine: step 1/1. Its function is as follows. Catalyzes the formation of S-adenosylmethionine (AdoMet) from methionine and ATP. The overall synthetic reaction is composed of two sequential steps, AdoMet formation and the subsequent tripolyphosphate hydrolysis which occurs prior to release of AdoMet from the enzyme. The protein is S-adenosylmethionine synthase of Bradyrhizobium sp. (strain ORS 278).